We begin with the raw amino-acid sequence, 99 residues long: MSKITNEQVKHVAHLARLEITEEEATKFSAQLEAILNFADQLEEVDTEGVEPTFHVLDLQNVLREDVAETSLTQEEILKNAAHTEDGQFKVPSILGGGE.

The protein belongs to the GatC family. As to quaternary structure, heterotrimer of A, B and C subunits.

It catalyses the reaction L-glutamyl-tRNA(Gln) + L-glutamine + ATP + H2O = L-glutaminyl-tRNA(Gln) + L-glutamate + ADP + phosphate + H(+). The catalysed reaction is L-aspartyl-tRNA(Asn) + L-glutamine + ATP + H2O = L-asparaginyl-tRNA(Asn) + L-glutamate + ADP + phosphate + 2 H(+). Its function is as follows. Allows the formation of correctly charged Asn-tRNA(Asn) or Gln-tRNA(Gln) through the transamidation of misacylated Asp-tRNA(Asn) or Glu-tRNA(Gln) in organisms which lack either or both of asparaginyl-tRNA or glutaminyl-tRNA synthetases. The reaction takes place in the presence of glutamine and ATP through an activated phospho-Asp-tRNA(Asn) or phospho-Glu-tRNA(Gln). This chain is Aspartyl/glutamyl-tRNA(Asn/Gln) amidotransferase subunit C, found in Macrococcus caseolyticus (strain JCSC5402) (Macrococcoides caseolyticum).